The following is a 211-amino-acid chain: Protein-lysine N-methyltransferase DDB_G0272708 (211 aa).

It belongs to the class I-like SAM-binding methyltransferase superfamily. EFM5 family.

It localises to the cytoplasm. Its function is as follows. S-adenosyl-L-methionine-dependent protein-lysine N-methyltransferase that methylates elongation factor 1-alpha. This is Protein-lysine N-methyltransferase DDB_G0272708 from Dictyostelium discoideum (Social amoeba).